Here is a 241-residue protein sequence, read N- to C-terminus: Chaperone protein FimC (241 aa).

Residues 1–36 form the signal peptide; it reads MSNKNVNVRKSQEITFCLLAGILMFMAMMVAGRAEA.

The protein belongs to the periplasmic pilus chaperone family.

It is found in the periplasm. Its function is as follows. Required for the biogenesis of type 1 fimbriae. Binds and interact with FimH. The chain is Chaperone protein FimC (fimC) from Escherichia coli (strain K12).